Here is an 87-residue protein sequence, read N- to C-terminus: Large ribosomal subunit protein bL31B (87 aa).

Belongs to the bacterial ribosomal protein bL31 family. Type B subfamily. Part of the 50S ribosomal subunit.

The sequence is that of Large ribosomal subunit protein bL31B from Klebsiella pneumoniae (strain 342).